The sequence spans 218 residues: Small ribosomal subunit protein uS3c (218 aa).

The region spanning 47-118 (VQKNIRISSG…KLNIAITRIS (72 aa)) is the KH type-2 domain.

It belongs to the universal ribosomal protein uS3 family. As to quaternary structure, part of the 30S ribosomal subunit.

It localises to the plastid. The protein resides in the chloroplast. The sequence is that of Small ribosomal subunit protein uS3c (rps3) from Nasturtium officinale (Watercress).